A 423-amino-acid polypeptide reads, in one-letter code: Serine--tRNA ligase (423 aa).

228–230 contacts L-serine; the sequence is TSE. ATP is bound at residue 259 to 261; it reads RLE. Position 282 (Glu-282) interacts with L-serine. Residue 346 to 349 participates in ATP binding; the sequence is EISS. Ser-384 serves as a coordination point for L-serine.

It belongs to the class-II aminoacyl-tRNA synthetase family. Type-1 seryl-tRNA synthetase subfamily. In terms of assembly, homodimer. The tRNA molecule binds across the dimer.

It is found in the cytoplasm. The enzyme catalyses tRNA(Ser) + L-serine + ATP = L-seryl-tRNA(Ser) + AMP + diphosphate + H(+). It carries out the reaction tRNA(Sec) + L-serine + ATP = L-seryl-tRNA(Sec) + AMP + diphosphate + H(+). It participates in aminoacyl-tRNA biosynthesis; selenocysteinyl-tRNA(Sec) biosynthesis; L-seryl-tRNA(Sec) from L-serine and tRNA(Sec): step 1/1. Its function is as follows. Catalyzes the attachment of serine to tRNA(Ser). Is also able to aminoacylate tRNA(Sec) with serine, to form the misacylated tRNA L-seryl-tRNA(Sec), which will be further converted into selenocysteinyl-tRNA(Sec). The sequence is that of Serine--tRNA ligase from Ehrlichia canis (strain Jake).